The chain runs to 501 residues: UPF0288 protein Maeo_0995 (501 aa).

Belongs to the UPF0288 family.

This Methanococcus aeolicus (strain ATCC BAA-1280 / DSM 17508 / OCM 812 / Nankai-3) protein is UPF0288 protein Maeo_0995.